Here is a 229-residue protein sequence, read N- to C-terminus: AA9 family lytic polysaccharide monooxygenase E (229 aa).

A signal peptide spans 1-19 (MRSSDITFVLLSVVATVRS). His-20 provides a ligand contact to Cu(2+). A disulfide bond links Cys-57 and Cys-178. Asn-76 is a glycosylation site (N-linked (GlcNAc...) asparagine). His-99 lines the Cu(2+) pocket. Residues His-164 and Gln-173 each contribute to the O2 site. Tyr-175 is a Cu(2+) binding site. A glycan (N-linked (GlcNAc...) asparagine) is linked at Asn-217.

Belongs to the polysaccharide monooxygenase AA9 family. Cu(2+) serves as cofactor.

The protein resides in the secreted. It carries out the reaction [(1-&gt;4)-beta-D-glucosyl]n+m + reduced acceptor + O2 = 4-dehydro-beta-D-glucosyl-[(1-&gt;4)-beta-D-glucosyl]n-1 + [(1-&gt;4)-beta-D-glucosyl]m + acceptor + H2O.. Lytic polysaccharide monooxygenase (LPMO) that depolymerizes crystalline and amorphous polysaccharides via the oxidation of scissile alpha- or beta-(1-4)-glycosidic bonds, yielding C1 and C4 oxidation products. Catalysis by LPMOs requires the reduction of the active-site copper from Cu(II) to Cu(I) by a reducing agent and H(2)O(2) or O(2) as a cosubstrate. This is AA9 family lytic polysaccharide monooxygenase E from Botryotinia fuckeliana (strain B05.10) (Noble rot fungus).